The following is a 232-amino-acid chain: Ubiquinone biosynthesis O-methyltransferase (232 aa).

The S-adenosyl-L-methionine site is built by Arg36, Gly55, Asp76, and Leu120.

It belongs to the methyltransferase superfamily. UbiG/COQ3 family.

It catalyses the reaction a 3-demethylubiquinol + S-adenosyl-L-methionine = a ubiquinol + S-adenosyl-L-homocysteine + H(+). The catalysed reaction is a 3-(all-trans-polyprenyl)benzene-1,2-diol + S-adenosyl-L-methionine = a 2-methoxy-6-(all-trans-polyprenyl)phenol + S-adenosyl-L-homocysteine + H(+). Its pathway is cofactor biosynthesis; ubiquinone biosynthesis. In terms of biological role, O-methyltransferase that catalyzes the 2 O-methylation steps in the ubiquinone biosynthetic pathway. In Pseudomonas aeruginosa (strain LESB58), this protein is Ubiquinone biosynthesis O-methyltransferase.